The sequence spans 248 residues: Trihelix transcription factor ENAP2 (248 aa).

A compositionally biased stretch (polar residues) spans 1–13 (METTTPQSKSSVS). Residues 1-20 (METTTPQSKSSVSHRPPLGR) form a disordered region. Residues 24 to 113 (WSEEATATLV…RLDVLIGPVV (90 aa)) constitute a DNA-binding region (MADF). Positions 69–76 (RKKTDLQC) match the Nuclear localization signal motif. Residues 123-150 (SAPFKNHLNPTGSNSTGSSLEDDDEDDD) are disordered. Over residues 130–141 (LNPTGSNSTGSS) the composition is skewed to polar residues. Positions 190 to 210 (YERIEGKKQQMMIELEKQRME) form a coiled coil.

Interacts with the Agrobacterium tumefaciens virulence protein F (VirF) in the nucleus. Binds to EIN2 C-terminal region in the presence of ethylene.

It is found in the nucleus. It localises to the nucleoplasm. Its function is as follows. Probable transcription regulator. Promotes histone acetylation during ethylene signaling in an EIN2-dependent manner, thus regulating positively ethylene-responsive genes. This Arabidopsis thaliana (Mouse-ear cress) protein is Trihelix transcription factor ENAP2.